Reading from the N-terminus, the 321-residue chain is Lipoyl synthase (321 aa).

[4Fe-4S] cluster-binding residues include cysteine 68, cysteine 73, cysteine 79, cysteine 94, cysteine 98, cysteine 101, and serine 308. The Radical SAM core domain occupies 80-297 (FNHGTATFMI…KAEAMAMGFT (218 aa)).

It belongs to the radical SAM superfamily. Lipoyl synthase family. It depends on [4Fe-4S] cluster as a cofactor.

It is found in the cytoplasm. It carries out the reaction [[Fe-S] cluster scaffold protein carrying a second [4Fe-4S](2+) cluster] + N(6)-octanoyl-L-lysyl-[protein] + 2 oxidized [2Fe-2S]-[ferredoxin] + 2 S-adenosyl-L-methionine + 4 H(+) = [[Fe-S] cluster scaffold protein] + N(6)-[(R)-dihydrolipoyl]-L-lysyl-[protein] + 4 Fe(3+) + 2 hydrogen sulfide + 2 5'-deoxyadenosine + 2 L-methionine + 2 reduced [2Fe-2S]-[ferredoxin]. It participates in protein modification; protein lipoylation via endogenous pathway; protein N(6)-(lipoyl)lysine from octanoyl-[acyl-carrier-protein]: step 2/2. Its function is as follows. Catalyzes the radical-mediated insertion of two sulfur atoms into the C-6 and C-8 positions of the octanoyl moiety bound to the lipoyl domains of lipoate-dependent enzymes, thereby converting the octanoylated domains into lipoylated derivatives. This Yersinia enterocolitica serotype O:8 / biotype 1B (strain NCTC 13174 / 8081) protein is Lipoyl synthase.